Here is a 580-residue protein sequence, read N- to C-terminus: V-type proton ATPase catalytic subunit A (580 aa).

209-216 (GAFGCGKT) is an ATP binding site.

This sequence belongs to the ATPase alpha/beta chains family. As to quaternary structure, V-ATPase is a heteromultimeric enzyme composed of a peripheral catalytic V1 complex (main components: subunits A, B, C, D, E, and F) attached to an integral membrane V0 proton pore complex (main component: the proteolipid protein).

It carries out the reaction ATP + H2O + 4 H(+)(in) = ADP + phosphate + 5 H(+)(out). Functionally, catalytic subunit of the peripheral V1 complex of vacuolar ATPase. V-ATPase vacuolar ATPase is responsible for acidifying a variety of intracellular compartments in eukaryotic cells. The protein is V-type proton ATPase catalytic subunit A of Hordeum vulgare (Barley).